The primary structure comprises 160 residues: Lipoprotein signal peptidase (160 aa).

The next 2 membrane-spanning stretches (helical) occupy residues 60-80 (TEWLIAASCLGVILALTAFFL) and 84-104 (LPFLDTRPGVAALGIILAGTI). Residues D118 and D132 contribute to the active site. A helical transmembrane segment spans residues 127–147 (TFNMADSCLTLGIIWLVLLYL).

This sequence belongs to the peptidase A8 family.

It is found in the cell membrane. It catalyses the reaction Release of signal peptides from bacterial membrane prolipoproteins. Hydrolyzes -Xaa-Yaa-Zaa-|-(S,diacylglyceryl)Cys-, in which Xaa is hydrophobic (preferably Leu), and Yaa (Ala or Ser) and Zaa (Gly or Ala) have small, neutral side chains.. The protein operates within protein modification; lipoprotein biosynthesis (signal peptide cleavage). Its function is as follows. This protein specifically catalyzes the removal of signal peptides from prolipoproteins. This is Lipoprotein signal peptidase from Dehalococcoides mccartyi (strain ATCC BAA-2266 / KCTC 15142 / 195) (Dehalococcoides ethenogenes (strain 195)).